A 471-amino-acid polypeptide reads, in one-letter code: Secretogranin-3 (471 aa).

Positions 1–22 (MGFLWTGTWIVVLMLHSSPIQA) are cleaved as a signal peptide. Disordered regions lie at residues 23–72 (FPKP…ESNY) and 86–105 (EKEK…NDNK). Residues 32 to 45 (KPLHNRELSAERPL) are compositionally biased toward basic and acidic residues. Ser-40 is modified (phosphoserine). Ser-40 carries O-linked (Xyl...) (chondroitin sulfate) serine glycosylation. N-linked (GlcNAc...) asparagine glycosylation occurs at Asn-71. A compositionally biased stretch (basic and acidic residues) spans 86 to 96 (EKEKNEKERQS). Asn-353 carries N-linked (GlcNAc...) asparagine glycosylation. Positions 357–409 (LFAVPSEKSHEETDSTKEEAAKMEKEYGTLKDSTKDDDSNPRGKTDEHKGKTE) are disordered. Basic and acidic residues predominate over residues 363-409 (EKSHEETDSTKEEAAKMEKEYGTLKDSTKDDDSNPRGKTDEHKGKTE). Ser-365 is modified (phosphoserine).

Interacts with CHGA. Interacts with secretogranin II/SCG2. Interacts (via C-terminus) with CPE.

Its subcellular location is the cytoplasmic vesicle. It localises to the secretory vesicle. It is found in the secretory vesicle membrane. The protein localises to the secreted. Its function is as follows. Member of the granin protein family that regulates the biogenesis of secretory granules. Acts as a sorting receptor for intragranular proteins including chromogranin A/CHGA. May also play a role in angiogenesis. Promotes endothelial proliferation, migration and tube formation through MEK/ERK signaling pathway. The sequence is that of Secretogranin-3 (SCG3) from Bos taurus (Bovine).